The primary structure comprises 274 residues: Probable lipoprotein peptidase YaeF (274 aa).

The first 20 residues, 1-20 (MDKPKAYCRLFLPSFLLLSA), serve as a signal peptide directing secretion. Cysteine 21 carries N-palmitoyl cysteine lipidation. Cysteine 21 is lipidated: S-diacylglycerol cysteine. Residue cysteine 207 is the Nucleophile of the active site. Histidine 257 functions as the Proton acceptor in the catalytic mechanism.

It localises to the cell inner membrane. The polypeptide is Probable lipoprotein peptidase YaeF (yaeF) (Escherichia coli (strain K12)).